The chain runs to 73 residues: Translation initiation factor IF-1 1 (73 aa).

One can recognise an S1-like domain in the interval 1–72 (MAKEELIEFG…TKGRINFRHK (72 aa)).

It belongs to the IF-1 family. In terms of assembly, component of the 30S ribosomal translation pre-initiation complex which assembles on the 30S ribosome in the order IF-2 and IF-3, IF-1 and N-formylmethionyl-tRNA(fMet); mRNA recruitment can occur at any time during PIC assembly.

The protein resides in the cytoplasm. One of the essential components for the initiation of protein synthesis. Stabilizes the binding of IF-2 and IF-3 on the 30S subunit to which N-formylmethionyl-tRNA(fMet) subsequently binds. Helps modulate mRNA selection, yielding the 30S pre-initiation complex (PIC). Upon addition of the 50S ribosomal subunit IF-1, IF-2 and IF-3 are released leaving the mature 70S translation initiation complex. This is Translation initiation factor IF-1 1 from Cupriavidus pinatubonensis (strain JMP 134 / LMG 1197) (Cupriavidus necator (strain JMP 134)).